Reading from the N-terminus, the 294-residue chain is Probable cobalamin biosynthesis protein CobD (294 aa).

4 helical membrane-spanning segments follow: residues 52–72 (AGLL…IVPF), 73–93 (YAPF…SFAI), 145–165 (DSVV…AVIY), and 268–288 (IYWL…ATGV).

This sequence belongs to the CobD/CbiB family.

Its subcellular location is the cell membrane. It participates in cofactor biosynthesis; adenosylcobalamin biosynthesis. In terms of biological role, converts cobyric acid to cobinamide by the addition of aminopropanol on the F carboxylic group. The protein is Probable cobalamin biosynthesis protein CobD of Thermococcus kodakarensis (strain ATCC BAA-918 / JCM 12380 / KOD1) (Pyrococcus kodakaraensis (strain KOD1)).